The chain runs to 325 residues: NADH-quinone oxidoreductase subunit H (325 aa).

Transmembrane regions (helical) follow at residues 11-31, 81-101, 114-134, 154-174, 186-206, 237-257, 265-285, and 304-324; these read ILLT…CGAF, VIFT…FAIV, IGIL…LFAG, LSYE…AGSF, VWNV…GVAV, FFVG…TLFF, LPPF…FILI, and ICLP…LWQA.

The protein belongs to the complex I subunit 1 family. In terms of assembly, NDH-1 is composed of 13 different subunits. Subunits NuoA, H, J, K, L, M, N constitute the membrane sector of the complex.

The protein localises to the cell inner membrane. The enzyme catalyses a quinone + NADH + 5 H(+)(in) = a quinol + NAD(+) + 4 H(+)(out). In terms of biological role, NDH-1 shuttles electrons from NADH, via FMN and iron-sulfur (Fe-S) centers, to quinones in the respiratory chain. The immediate electron acceptor for the enzyme in this species is believed to be ubiquinone. Couples the redox reaction to proton translocation (for every two electrons transferred, four hydrogen ions are translocated across the cytoplasmic membrane), and thus conserves the redox energy in a proton gradient. This subunit may bind ubiquinone. The polypeptide is NADH-quinone oxidoreductase subunit H (Escherichia coli O45:K1 (strain S88 / ExPEC)).